We begin with the raw amino-acid sequence, 201 residues long: Large ribosomal subunit protein uL18 (201 aa).

This sequence belongs to the universal ribosomal protein uL18 family. As to quaternary structure, part of the 50S ribosomal subunit. Contacts the 5S and 23S rRNAs.

This is one of the proteins that bind and probably mediate the attachment of the 5S RNA into the large ribosomal subunit, where it forms part of the central protuberance. In Thermococcus gammatolerans (strain DSM 15229 / JCM 11827 / EJ3), this protein is Large ribosomal subunit protein uL18.